Consider the following 146-residue polypeptide: Horcolin (146 aa).

The tract at residues 1–21 is disordered; sequence MSKPVKIGPWGGNGGSERDVQ. The 143-residue stretch at 4 to 146 folds into the Jacalin-type lectin domain; that stretch reads PVKIGPWGGN…LDAIGFYITP (143 aa).

The protein belongs to the jacalin lectin family.

Its subcellular location is the secreted. The protein resides in the extracellular space. It localises to the apoplast. Functionally, mannose-specific lectin. Has a weak agglutinating activity against rabbit erythrocytes. The protein is Horcolin of Hordeum vulgare (Barley).